A 350-amino-acid chain; its full sequence is Dihydroorotate dehydrogenase (quinone) (350 aa).

FMN-binding positions include 59–63 (AGLDK) and Thr-83. Lys-63 is a binding site for substrate. 108–112 (NRMGF) serves as a coordination point for substrate. FMN-binding residues include Asn-136 and Asn-169. Asn-169 contributes to the substrate binding site. The Nucleophile role is filled by Ser-172. Residue Asn-174 participates in substrate binding. Residues Lys-214 and Thr-242 each contribute to the FMN site. 243–244 (NT) is a binding site for substrate. Residues Gly-265, Gly-294, and 315–316 (YS) each bind FMN.

Belongs to the dihydroorotate dehydrogenase family. Type 2 subfamily. As to quaternary structure, monomer. FMN is required as a cofactor.

Its subcellular location is the cell membrane. The enzyme catalyses (S)-dihydroorotate + a quinone = orotate + a quinol. The protein operates within pyrimidine metabolism; UMP biosynthesis via de novo pathway; orotate from (S)-dihydroorotate (quinone route): step 1/1. Catalyzes the conversion of dihydroorotate to orotate with quinone as electron acceptor. The polypeptide is Dihydroorotate dehydrogenase (quinone) (Aromatoleum aromaticum (strain DSM 19018 / LMG 30748 / EbN1) (Azoarcus sp. (strain EbN1))).